Here is a 218-residue protein sequence, read N- to C-terminus: Thiopurine S-methyltransferase (218 aa).

Residues tryptophan 10, leucine 45, glutamate 66, and arginine 123 each contribute to the S-adenosyl-L-methionine site.

It belongs to the class I-like SAM-binding methyltransferase superfamily. TPMT family.

It localises to the cytoplasm. It carries out the reaction S-adenosyl-L-methionine + a thiopurine = S-adenosyl-L-homocysteine + a thiopurine S-methylether.. In Pseudomonas aeruginosa (strain ATCC 15692 / DSM 22644 / CIP 104116 / JCM 14847 / LMG 12228 / 1C / PRS 101 / PAO1), this protein is Thiopurine S-methyltransferase.